We begin with the raw amino-acid sequence, 326 residues long: Mitochondrial glycine transporter (326 aa).

Solcar repeat units lie at residues 45–134 (HPVI…SKQY), 141–225 (PTAL…TRTA), and 237–321 (LIPL…MMAR). 6 helical membrane-spanning segments follow: residues 51 to 76 (FLCG…TRLQ), 109 to 135 (GMSP…KQYF), 147 to 172 (VILG…TRYE), 200 to 223 (GLTA…SQTR), 241 to 267 (INFS…KTHM), and 296 to 314 (GSVP…AWTV).

Belongs to the mitochondrial carrier (TC 2.A.29) family. SLC25A38 subfamily.

The protein localises to the mitochondrion inner membrane. It catalyses the reaction glycine(in) = glycine(out). In terms of biological role, mitochondrial glycine transporter that imports glycine into the mitochondrial matrix. Plays an important role in providing glycine for the first enzymatic step in heme biosynthesis, the condensation of glycine with succinyl-CoA to produce 5-aminolevulinate (ALA) in the mitochondrial matrix. Required during erythropoiesis. Its function is as follows. Plays a role as pro-apoptotic protein that induces caspase-dependent apoptosis. The protein is Mitochondrial glycine transporter of Mus musculus (Mouse).